Consider the following 394-residue polypeptide: Choline/ethanolamine kinase (394 aa).

The tract at residues 1–42 (MAADGTGVVGGGAVGGGLPKDGLQDAKCPEPIPNRRRASSLS) is disordered. N-acetylalanine is present on alanine 2. Residues 7 to 19 (GVVGGGAVGGGLP) show a composition bias toward gly residues. ATP-binding positions include 75-81 (SGGLSNL), arginine 104, 146-152 (QYLPSRP), glutamine 244, and aspartate 264. A substrate-binding site is contributed by 77–79 (GLS).

It belongs to the choline/ethanolamine kinase family. In terms of assembly, homodimer, and heterodimer with CHKA. Expressed ubiquitously with the highest level in testis.

It carries out the reaction choline + ATP = phosphocholine + ADP + H(+). The catalysed reaction is ethanolamine + ATP = phosphoethanolamine + ADP + H(+). The protein operates within phospholipid metabolism; phosphatidylethanolamine biosynthesis; phosphatidylethanolamine from ethanolamine: step 1/3. In terms of biological role, has a key role in phospholipid metabolism, and catalyzes the first step of phosphatidylethanolamine and phosphatidylcholine biosynthesis. This Mus musculus (Mouse) protein is Choline/ethanolamine kinase (Chkb).